The following is a 387-amino-acid chain: G-protein coupled receptor homolog R33 (387 aa).

Topologically, residues 1–33 (MDVLLGTEELEDELHQLHFNYTCVPSLGLSVAR) are extracellular. Residue Asn20 is glycosylated (N-linked (GlcNAc...) asparagine; by host). A helical transmembrane segment spans residues 34–61 (DAETAVNFLIVLVGGPMNFLVLATQMLS). At 62–71 (NRSYSVSTPT) the chain is on the cytoplasmic side. Residues 72–94 (LYMTNLYLANLLTVATLPFLMLS) form a helical membrane-spanning segment. Residues 95–107 (NRGLVGSSPEGCK) lie on the Extracellular side of the membrane. Residues 108 to 129 (IAALAYYATCTAGFATLMLIAI) traverse the membrane as a helical segment. Residues 130–150 (NRYRVIHQRTRSGAGSKRQTY) are Cytoplasmic-facing. A helical membrane pass occupies residues 151–169 (AVLAVTWLASLMCASPAPL). At 170–204 (YATVMAHDSADALAFETCIIYFSYDQVKTVLATFK) the chain is on the extracellular side. The chain crosses the membrane as a helical span at residues 205–224 (ILITMIWGITPVVMMSWFYV). Over 225–244 (FFYRRLKLTSYRRRSQTLTF) the chain is Cytoplasmic. The chain crosses the membrane as a helical span at residues 245–268 (VTTLMLSFLVVQTPFVAIMSYDSY). Residues 269-285 (GVLNWPINCDTINKRDA) lie on the Extracellular side of the membrane. Residues 286-309 (VSMLARVVPNFHCLLNPVLYAFLG) traverse the membrane as a helical segment. At 310–387 (RDFNKRFILC…PPPPPPPPNC (78 aa)) the chain is on the cytoplasmic side. Residues 368–387 (RLRALGRPPPPPPPPPPPNC) form a disordered region. A compositionally biased stretch (pro residues) spans 374–387 (RPPPPPPPPPPPNC).

This sequence belongs to the G-protein coupled receptor 1 family.

The protein resides in the host cell membrane. Plays an important role in vivo, in particular in the dissemination to or replication in the salivary gland. The protein is G-protein coupled receptor homolog R33 of Rattus.